Consider the following 275-residue polypeptide: 3-methyl-2-oxobutanoate hydroxymethyltransferase (275 aa).

2 residues coordinate Mg(2+): aspartate 51 and aspartate 90. Residues 51–52, aspartate 90, and lysine 120 contribute to the 3-methyl-2-oxobutanoate site; that span reads DS. Mg(2+) is bound at residue glutamate 122. Catalysis depends on glutamate 189, which acts as the Proton acceptor.

This sequence belongs to the PanB family. As to quaternary structure, homodecamer; pentamer of dimers. It depends on Mg(2+) as a cofactor.

It is found in the cytoplasm. The enzyme catalyses 3-methyl-2-oxobutanoate + (6R)-5,10-methylene-5,6,7,8-tetrahydrofolate + H2O = 2-dehydropantoate + (6S)-5,6,7,8-tetrahydrofolate. Its pathway is cofactor biosynthesis; (R)-pantothenate biosynthesis; (R)-pantoate from 3-methyl-2-oxobutanoate: step 1/2. Catalyzes the reversible reaction in which hydroxymethyl group from 5,10-methylenetetrahydrofolate is transferred onto alpha-ketoisovalerate to form ketopantoate. This chain is 3-methyl-2-oxobutanoate hydroxymethyltransferase, found in Phenylobacterium zucineum (strain HLK1).